Consider the following 186-residue polypeptide: Elongation factor P (186 aa).

The protein belongs to the elongation factor P family.

It is found in the cytoplasm. It participates in protein biosynthesis; polypeptide chain elongation. Functionally, involved in peptide bond synthesis. Stimulates efficient translation and peptide-bond synthesis on native or reconstituted 70S ribosomes in vitro. Probably functions indirectly by altering the affinity of the ribosome for aminoacyl-tRNA, thus increasing their reactivity as acceptors for peptidyl transferase. This is Elongation factor P from Thiobacillus denitrificans (strain ATCC 25259 / T1).